Here is a 557-residue protein sequence, read N- to C-terminus: Venom carboxylesterase-6 (557 aa).

Residues 1 to 21 (MYMLKLSYILLFLGFVKFSWQ) form the signal peptide. Cysteines 88 and 108 form a disulfide. N-linked (GlcNAc...) asparagine glycosylation is present at Asn145. Ser212 (acyl-ester intermediate) is an active-site residue. A disulfide bond links Cys264 and Cys275. Glu341 acts as the Charge relay system in catalysis. A glycan (N-linked (GlcNAc...) asparagine) is linked at Asn374. His464 functions as the Charge relay system in the catalytic mechanism. 3 N-linked (GlcNAc...) asparagine glycosylation sites follow: Asn478, Asn528, and Asn542.

Belongs to the type-B carboxylesterase/lipase family. Expressed by the venom gland.

It is found in the secreted. The catalysed reaction is a carboxylic ester + H2O = an alcohol + a carboxylate + H(+). This Apis mellifera (Honeybee) protein is Venom carboxylesterase-6.